Consider the following 222-residue polypeptide: Kinetochore protein Spc25 (222 aa).

Residues 51 to 86 adopt a coiled-coil conformation; it reads RHQRKVGKLQKVLMERREELDKRVSFIEELDRELEA.

It belongs to the SPC25 family. As to quaternary structure, component of the Ndc80 complex, which is composed of Ndc80, Nuf2 and Spc25.

The protein resides in the nucleus. It is found in the chromosome. The protein localises to the centromere. Its subcellular location is the kinetochore. Functionally, acts as a component of the essential kinetochore-associated Ndc80 complex, which is required for chromosome segregation and spindle checkpoint activity during meiosis and mitosis. Required for kinetochore integrity and the organization of stable microtubule binding sites in the outer plate of the kinetochore. Participates in SAC signaling that responds specifically to disruptions in spindle microtubule dynamics. The NDC80 complex synergistically enhances the affinity of the SKA1 complex for microtubules and may allow the NDC80 complex to track depolymerizing microtubules. The chain is Kinetochore protein Spc25 from Drosophila simulans (Fruit fly).